A 306-amino-acid polypeptide reads, in one-letter code: 1-aminocyclopropane-1-carboxylate oxidase (306 aa).

In terms of domain architecture, Fe2OG dioxygenase spans 153–253 (PFFGTKVSHY…RRSIASFYNP (101 aa)). Fe cation contacts are provided by His-177, Asp-179, and His-234.

Belongs to the iron/ascorbate-dependent oxidoreductase family. It depends on Fe cation as a cofactor.

The enzyme catalyses 1-aminocyclopropane-1-carboxylate + L-ascorbate + O2 = ethene + L-dehydroascorbate + hydrogen cyanide + CO2 + 2 H2O. It participates in alkene biosynthesis; ethylene biosynthesis via S-adenosyl-L-methionine; ethylene from S-adenosyl-L-methionine: step 2/2. The polypeptide is 1-aminocyclopropane-1-carboxylate oxidase (MAO1B) (Musa acuminata (Banana)).